The chain runs to 193 residues: NADH-quinone oxidoreductase subunit B (193 aa).

Residues C72, C73, C137, and C167 each contribute to the [4Fe-4S] cluster site.

Belongs to the complex I 20 kDa subunit family. As to quaternary structure, NDH-1 is composed of 14 different subunits. Subunits NuoB, C, D, E, F, and G constitute the peripheral sector of the complex. Requires [4Fe-4S] cluster as cofactor.

Its subcellular location is the cell inner membrane. It catalyses the reaction a quinone + NADH + 5 H(+)(in) = a quinol + NAD(+) + 4 H(+)(out). Functionally, NDH-1 shuttles electrons from NADH, via FMN and iron-sulfur (Fe-S) centers, to quinones in the respiratory chain. The immediate electron acceptor for the enzyme in this species is believed to be ubiquinone. Couples the redox reaction to proton translocation (for every two electrons transferred, four hydrogen ions are translocated across the cytoplasmic membrane), and thus conserves the redox energy in a proton gradient. The protein is NADH-quinone oxidoreductase subunit B of Rhizobium rhizogenes (strain K84 / ATCC BAA-868) (Agrobacterium radiobacter).